A 480-amino-acid chain; its full sequence is MPKEVITQRSVDYNQWYLDIVREADLAEVAEVVRGCIVVKAHGWAIWELMQRALDDRIKATGHANVQFPLLIPKSFIMKEAEHVEGFAPEVAEVTRAGGEELAEPYVIRPTSETIIGYFYSKWIRSYRDLPLLYNQWANVMRWEMRTRPFLRTAEFWWQEGHTAHATEAEAEEETLRILHEVYADFVEKEMAVPVIRGLKTEKEKFPGALRSYCIEAMMQDGRALQAGTSHNLGQNFARAFDITFTDQHNTIQYAWTTSWGVSTRLIGALIMTHSDDEGLVLPPRLAPIQVVVVPIYKNDEERSAVMEAVNRMTAAWKGRLRFKVDDRDTYSPGYKFNEWELKGVPVRIEIGPKDVAKETVALARRDMPGKAGKSFVPQAGLTERIEALLAEMQTGLFQRALAFREARTADVTTYDELKEQIERGFARAYWAGSTADEKRIQEETRATIRCIPLEQPGTVGRCVYTGRETDRQVIFARAY.

It belongs to the class-II aminoacyl-tRNA synthetase family. ProS type 3 subfamily. In terms of assembly, homodimer.

It is found in the cytoplasm. The catalysed reaction is tRNA(Pro) + L-proline + ATP = L-prolyl-tRNA(Pro) + AMP + diphosphate. In terms of biological role, catalyzes the attachment of proline to tRNA(Pro) in a two-step reaction: proline is first activated by ATP to form Pro-AMP and then transferred to the acceptor end of tRNA(Pro). This Chloroflexus aggregans (strain MD-66 / DSM 9485) protein is Proline--tRNA ligase.